A 627-amino-acid chain; its full sequence is Protein zyg-11 homolog A (627 aa).

3 LRR repeats span residues 123–146, 203–227, and 409–432; these read LPNL…LSCK, LPNL…SFLQ, and ITSI…LIMA.

The protein belongs to the zyg-11 family.

Probably acts as a target recruitment subunit in an E3 ubiquitin ligase complex ZYGA-CUL2-elongin BC. This chain is Protein zyg-11 homolog A (Zyg11a), found in Mus musculus (Mouse).